Consider the following 362-residue polypeptide: tRNA/tmRNA (uracil-C(5))-methyltransferase (362 aa).

Residues Gln182, Tyr210, Asn215, Glu231, and Asp293 each contribute to the S-adenosyl-L-methionine site. Residue Cys318 is the Nucleophile of the active site. Glu352 acts as the Proton acceptor in catalysis.

This sequence belongs to the class I-like SAM-binding methyltransferase superfamily. RNA M5U methyltransferase family. TrmA subfamily.

It carries out the reaction uridine(54) in tRNA + S-adenosyl-L-methionine = 5-methyluridine(54) in tRNA + S-adenosyl-L-homocysteine + H(+). The enzyme catalyses uridine(341) in tmRNA + S-adenosyl-L-methionine = 5-methyluridine(341) in tmRNA + S-adenosyl-L-homocysteine + H(+). Functionally, dual-specificity methyltransferase that catalyzes the formation of 5-methyluridine at position 54 (m5U54) in all tRNAs, and that of position 341 (m5U341) in tmRNA (transfer-mRNA). The chain is tRNA/tmRNA (uracil-C(5))-methyltransferase from Neisseria gonorrhoeae (strain ATCC 700825 / FA 1090).